The following is a 279-amino-acid chain: Threonylcarbamoyl-AMP synthase (279 aa).

Residues Met-1 to Ala-55 constitute a mitochondrion transit peptide. The interval Ser-21–Ala-41 is disordered. A Phosphoserine modification is found at Ser-60. Positions Thr-67–Ala-257 constitute a YrdC-like domain.

Belongs to the SUA5 family. As to quaternary structure, interacts with RSC1A1. In terms of tissue distribution, ubiquitously expressed.

Its subcellular location is the cytoplasm. It localises to the mitochondrion. The protein resides in the cell membrane. The enzyme catalyses L-threonine + hydrogencarbonate + ATP = L-threonylcarbamoyladenylate + diphosphate + H2O. Cytoplasmic and mitochondrial threonylcarbamoyl-AMP synthase required for the formation of a threonylcarbamoyl group on adenosine at position 37 (t(6)A37) in tRNAs that read codons beginning with adenine. Catalyzes the conversion of L-threonine, HCO(3)(-)/CO(2) and ATP to give threonylcarbamoyl-AMP (TC-AMP) as the acyladenylate intermediate, with the release of diphosphate. Participates in t(6)A37 formation in cytoplasmic and mitochondrial tRNAs. May regulate the activity of some transporters. The polypeptide is Threonylcarbamoyl-AMP synthase (Homo sapiens (Human)).